Reading from the N-terminus, the 191-residue chain is Glycerol-3-phosphate acyltransferase (191 aa).

6 helical membrane-spanning segments follow: residues 7 to 27 (ILVL…SYIG), 51 to 71 (KLAV…VMLA), 80 to 100 (FVFM…WLSF), 115 to 135 (FIEY…FVIF), 139 to 159 (SLSS…HYSA), and 161 to 181 (ESIT…ENIV).

The protein belongs to the PlsY family. As to quaternary structure, probably interacts with PlsX.

It localises to the cell inner membrane. The enzyme catalyses an acyl phosphate + sn-glycerol 3-phosphate = a 1-acyl-sn-glycero-3-phosphate + phosphate. Its pathway is lipid metabolism; phospholipid metabolism. Functionally, catalyzes the transfer of an acyl group from acyl-phosphate (acyl-PO(4)) to glycerol-3-phosphate (G3P) to form lysophosphatidic acid (LPA). This enzyme utilizes acyl-phosphate as fatty acyl donor, but not acyl-CoA or acyl-ACP. The protein is Glycerol-3-phosphate acyltransferase of Ehrlichia canis (strain Jake).